A 155-amino-acid polypeptide reads, in one-letter code: Ribosomal RNA large subunit methyltransferase H (155 aa).

Residues leucine 72, glycine 103, and 122-127 contribute to the S-adenosyl-L-methionine site; that span reads LSPLTL.

This sequence belongs to the RNA methyltransferase RlmH family. In terms of assembly, homodimer.

The protein localises to the cytoplasm. It carries out the reaction pseudouridine(1915) in 23S rRNA + S-adenosyl-L-methionine = N(3)-methylpseudouridine(1915) in 23S rRNA + S-adenosyl-L-homocysteine + H(+). In terms of biological role, specifically methylates the pseudouridine at position 1915 (m3Psi1915) in 23S rRNA. This is Ribosomal RNA large subunit methyltransferase H from Histophilus somni (strain 2336) (Haemophilus somnus).